A 332-amino-acid polypeptide reads, in one-letter code: Small ribosomal subunit protein uS2 (332 aa).

Belongs to the universal ribosomal protein uS2 family.

The polypeptide is Small ribosomal subunit protein uS2 (Nitrobacter winogradskyi (strain ATCC 25391 / DSM 10237 / CIP 104748 / NCIMB 11846 / Nb-255)).